A 214-amino-acid polypeptide reads, in one-letter code: MDQTHKKIHWRLGLCKCKNISLVETRESYRSLHPTNQPYRSAIQCSWADDNFVTPEEEYEPSLPSSESPTDSCHADHESPDSPKYQQPAPGERPECEIYKDLCSDPQTVDWAAPPLKIRDGRHQELFLLYAEITLFSHWASIKLVEWAKPLELIYVIVQTWEPKLTMKAKAANANFYVTFSNRHGFPYHAVIRRTTTRIPNQMSLEFKMLMRSK.

The disordered stretch occupies residues 56 to 92 (EEEYEPSLPSSESPTDSCHADHESPDSPKYQQPAPGE).

It belongs to the UPF0725 (EMB2204) family.

The protein is UPF0725 protein At1g19565 of Arabidopsis thaliana (Mouse-ear cress).